The chain runs to 207 residues: Fibroblast growth factor 18 (207 aa).

A signal peptide spans 1 to 27 (MYSAPSACTCLCLHFLLLCFQVQVLAA). Asn-39 is a glycosylation site (N-linked (GlcNAc...) asparagine). Cys-109 and Cys-127 are joined by a disulfide. Residue Asn-137 is glycosylated (N-linked (GlcNAc...) asparagine). Residues 157–183 (GRPRKGPKTRENQQDVHFMKRYPKGQT) form a disordered region. Basic and acidic residues predominate over residues 164 to 174 (KTRENQQDVHF).

It belongs to the heparin-binding growth factors family. As to quaternary structure, interacts with FGFR3 and FGFR4. Mainly expressed in the lung. Not detected in brain, heart, liver, kidney and small intestine.

The protein localises to the secreted. Functionally, plays an important role in the regulation of cell proliferation, cell differentiation and cell migration. Required for normal ossification and bone development. Stimulates hepatic and intestinal proliferation. This chain is Fibroblast growth factor 18 (Fgf18), found in Rattus norvegicus (Rat).